The sequence spans 309 residues: UDP-N-acetylenolpyruvoylglucosamine reductase (309 aa).

The FAD-binding PCMH-type domain maps to 40–204 (LGGKVPLFAI…LQATFKLKKG (165 aa)). Arginine 182 is an active-site residue. Serine 233 (proton donor) is an active-site residue. The active site involves glutamate 304.

This sequence belongs to the MurB family. FAD serves as cofactor.

It is found in the cytoplasm. The catalysed reaction is UDP-N-acetyl-alpha-D-muramate + NADP(+) = UDP-N-acetyl-3-O-(1-carboxyvinyl)-alpha-D-glucosamine + NADPH + H(+). Its pathway is cell wall biogenesis; peptidoglycan biosynthesis. Cell wall formation. The polypeptide is UDP-N-acetylenolpyruvoylglucosamine reductase (Fervidobacterium nodosum (strain ATCC 35602 / DSM 5306 / Rt17-B1)).